We begin with the raw amino-acid sequence, 125 residues long: Fluoride-specific ion channel FluC (125 aa).

4 consecutive transmembrane segments (helical) span residues F5 to F25, F33 to W53, F69 to G89, and I101 to L121. The Na(+) site is built by G76 and T79.

Belongs to the fluoride channel Fluc/FEX (TC 1.A.43) family.

Its subcellular location is the cell inner membrane. The enzyme catalyses fluoride(in) = fluoride(out). Its activity is regulated as follows. Na(+) is not transported, but it plays an essential structural role and its presence is essential for fluoride channel function. Fluoride-specific ion channel. Important for reducing fluoride concentration in the cell, thus reducing its toxicity. This Desulforapulum autotrophicum (strain ATCC 43914 / DSM 3382 / VKM B-1955 / HRM2) (Desulfobacterium autotrophicum) protein is Fluoride-specific ion channel FluC.